Reading from the N-terminus, the 77-residue chain is Acyl carrier protein homolog (77 aa).

Residues 1 to 76 (MSINIKDLIM…DLINAFEDVL (76 aa)) form the Carrier domain. Ser36 carries the O-(pantetheine 4'-phosphoryl)serine modification.

4'-phosphopantetheine is transferred from CoA to a specific serine of the apo-ACP-like protein.

The protein operates within lipid metabolism; fatty acid biosynthesis. Functionally, carrier of the growing fatty acid chain in fatty acid biosynthesis. This is Acyl carrier protein homolog from Ureaplasma parvum serovar 3 (strain ATCC 700970).